Reading from the N-terminus, the 20-residue chain is Manganese peroxidase H5 (20 aa).

This sequence belongs to the peroxidase family. Ligninase subfamily.

The protein localises to the secreted. The enzyme catalyses 2 Mn(2+) + H2O2 + 2 H(+) = 2 Mn(3+) + 2 H2O. Functionally, catalyzes the oxidation of Mn(2+) to Mn(3+). The latter, acting as a diffusible redox mediator, is capable of oxidizing a variety of lignin compounds. The polypeptide is Manganese peroxidase H5 (Phanerodontia chrysosporium (White-rot fungus)).